The following is a 358-amino-acid chain: 3-dehydroquinate synthase (358 aa).

NAD(+)-binding positions include 69 to 74, 103 to 107, 127 to 128, Lys140, Lys149, and 167 to 170; these read DGEAHK, GVIGD, TT, and CLRT. Zn(2+) is bound by residues Glu182, His245, and His262.

It belongs to the sugar phosphate cyclases superfamily. Dehydroquinate synthase family. Requires Co(2+) as cofactor. Zn(2+) serves as cofactor. The cofactor is NAD(+).

It is found in the cytoplasm. The enzyme catalyses 7-phospho-2-dehydro-3-deoxy-D-arabino-heptonate = 3-dehydroquinate + phosphate. The protein operates within metabolic intermediate biosynthesis; chorismate biosynthesis; chorismate from D-erythrose 4-phosphate and phosphoenolpyruvate: step 2/7. Functionally, catalyzes the conversion of 3-deoxy-D-arabino-heptulosonate 7-phosphate (DAHP) to dehydroquinate (DHQ). The sequence is that of 3-dehydroquinate synthase from Tolumonas auensis (strain DSM 9187 / NBRC 110442 / TA 4).